The sequence spans 867 residues: Protein translocase subunit SecA 1 (867 aa).

Residues Q86, 104-108 (GEGKT), and D493 contribute to the ATP site.

The protein belongs to the SecA family. Monomer and homodimer. Part of the essential Sec protein translocation apparatus which comprises SecA, SecYEG and auxiliary proteins SecDF. Other proteins may also be involved.

It localises to the cell membrane. It is found in the cytoplasm. It carries out the reaction ATP + H2O + cellular proteinSide 1 = ADP + phosphate + cellular proteinSide 2.. Its function is as follows. Part of the Sec protein translocase complex. Interacts with the SecYEG preprotein conducting channel. Has a central role in coupling the hydrolysis of ATP to the transfer of proteins into and across the cell membrane, serving as an ATP-driven molecular motor driving the stepwise translocation of polypeptide chains across the membrane. The chain is Protein translocase subunit SecA 1 from Corynebacterium jeikeium (strain K411).